Reading from the N-terminus, the 155-residue chain is Ribosome maturation factor RimP (155 aa).

Belongs to the RimP family.

The protein resides in the cytoplasm. Required for maturation of 30S ribosomal subunits. The sequence is that of Ribosome maturation factor RimP from Prochlorococcus marinus (strain SARG / CCMP1375 / SS120).